The sequence spans 1087 residues: Synaptopodin-2 (1087 aa).

The 83-residue stretch at 6-88 folds into the PDZ domain; that stretch reads FICISMTGGA…SLHLLVKRPS (83 aa). Disordered regions lie at residues 24-52, 88-112, and 207-272; these read GKEE…EGDE, SSGT…HEGP, and GPIV…AGLP. Positions 101–112 are enriched in basic and acidic residues; that stretch reads TTNHQHLTHEGP. Polar residues-rich tracts occupy residues 207 to 230 and 246 to 255; these read GPIV…SQLE and TSLTSSTSSG. A phosphoserine mark is found at Ser-300, Ser-319, and Ser-320. Residues 320 to 359 are disordered; it reads SEGTEHGEDQRSGKDQSRPHKHRARHARLRRSESLSEKQV. Residues 322–337 show a composition bias toward basic and acidic residues; the sequence is GTEHGEDQRSGKDQSR. At Thr-323 the chain carries Phosphothreonine. Residues 338 to 348 are compositionally biased toward basic residues; that stretch reads PHKHRARHARL. Over residues 349–359 the composition is skewed to basic and acidic residues; that stretch reads RRSESLSEKQV. The Nuclear localization signal signature appears at 388-396; it reads KKRRRRARK. Residues Ser-540, Ser-541, Ser-543, and Ser-546 each carry the phosphoserine modification. The interaction with YWHAB stretch occupies residues 551–557; the sequence is RSLASVP. Ser-555 is subject to Phosphoserine; by PKA. Disordered regions lie at residues 581-817 and 832-863; these read AKPF…ALNL and NYTP…GMSG. Ser-596 is modified (phosphoserine). The interval 599–804 is interaction with YWHAB; that stretch reads RSVTSPISDF…AVSSIKIAQP (206 aa). Thr-602 carries the post-translational modification Phosphothreonine; by PKA and CaMK2. Ser-603 carries the post-translational modification Phosphoserine. Pro residues-rich tracts occupy residues 609–622 and 636–647; these read PAPP…PPPE and AQPPPWPQPAPW. The short motif at 611–614 is the PPPY motif element; the sequence is PPPY. Tyr-614 carries the phosphotyrosine modification. Ser-618 is subject to Phosphoserine. Residues 656–796 form an F-actin binding region; the sequence is SEQIASRDER…PPNPPQVTAV (141 aa). The tract at residues 656-909 is F-actin bundling activity; sequence SEQIASRDER…LPASWKYSSN (254 aa). Interaction with ACTN2 regions lie at residues 656-917 and 894-1087; these read SEQI…PPVA and QSPT…VVEE. Phosphoserine is present on residues Ser-697 and Ser-719. Positions 740–893 are actin binding; sequence AKQKTPPPVA…DTVQAHTVRA (154 aa). Thr-744 carries the post-translational modification Phosphothreonine. Over residues 751–777 the composition is skewed to low complexity; the sequence is KPAVKSPSSSQPVAPVSPVWSPGVAPA. Residues Ser-767 and Ser-771 each carry the phosphoserine modification. Residues 781–797 show a composition bias toward polar residues; the sequence is AFSTSNPPNPPQVTAVS. Positions 803–1087 are interaction with FLNC; sequence QPAAPPARPA…QVWKPSVVEE (285 aa). Residues Ser-895, Ser-899, and Ser-903 each carry the phosphoserine modification. Disordered stretches follow at residues 930–952, 970–1012, and 1037–1060; these read AIKS…KKPL, FTFQ…PTNA, and PVSA…STSY. The interval 993 to 1012 is interaction with ZYX; that stretch reads PAMKQALPPRQANVGSPTNA. Residues Ser-1008 and Ser-1050 each carry the phosphoserine modification. Low complexity predominate over residues 1037–1051; sequence PVSASPVPVSVPTSP.

This sequence belongs to the synaptopodin family. May self-associate in muscle cells under oxidative stress. Binds F-actin. Interacts with ACTN2; ACTN2 is proposed to anchor SYOP2 at Z lines in mature myocytes. Interacts with AKAP6, PPP3CA and CAMK2A. Interacts (phosphorylated form) with YWHAB; YWHAB competes with ACTN2 for interaction with SYNPO2. Interacts with KPNA2; mediating nuclear import of SYNOP2; dependent on interaction with YWHAB. Interacts with IPO13; may be implicated in SYNOP2 nuclear import. Interacts with ZYX, FLNC, ILK. Interacts with BAG3 (via WW 1 domain). May associate with the CASA complex consisting of HSPA8, HSPB8 and BAG3. Interacts with VPS18. In terms of processing, phosphorylated by PKA, and by CaMK2 at multiple sites. Dephosphorylated by calcineurin at Ser-555 and Thr-602; abrogating interaction with YWHAB and impairing nuclear import. As to expression, expressed in skeletal muscle, heart, colon, stomach, uterus and lung. Expression is restricted to muscle cell layers in colon, uterus and stomach.

The protein localises to the nucleus. It is found in the cytoplasm. The protein resides in the myofibril. It localises to the sarcomere. Its subcellular location is the z line. The protein localises to the cell junction. It is found in the focal adhesion. Has an actin-binding and actin-bundling activity. Can induce the formation of F-actin networks. At the sarcomeric Z lines is proposed to act as adapter protein that links nascent myofibers to the sarcolemma via ZYX and may play a role in early assembly and stabilization of the Z lines. Involved in autophagosome formation. May play a role in chaperone-assisted selective autophagy (CASA) involved in Z lines maintenance in striated muscle under mechanical tension; may link the client-processing CASA chaperone machinery to a membrane-tethering and fusion complex providing autophagosome membranes. Involved in regulation of cell migration. May be a tumor suppressor. This is Synaptopodin-2 (Synpo2) from Mus musculus (Mouse).